Reading from the N-terminus, the 152-residue chain is MSCMGAAVNIITTDGPAGRAGFTASAVCSVTDTPPTLLVCLNRGASVWPVFNENRTLCVNTLSAGQEPLSNLFGGKTPMEHRFAAARWQTGVTGCPQLEEALVSFDCRISQVVSVGTHDILFCAIEAIHRHTTPYGLVWFDRSYHALMRPAC.

Belongs to the non-flavoprotein flavin reductase family. RutF subfamily.

It catalyses the reaction FMNH2 + NAD(+) = FMN + NADH + 2 H(+). Catalyzes the reduction of FMN to FMNH2 which is used to reduce pyrimidine by RutA via the Rut pathway. This Shigella flexneri protein is FMN reductase (NADH) RutF.